Here is a 105-residue protein sequence, read N- to C-terminus: Large ribosomal subunit protein uL24 (105 aa).

It belongs to the universal ribosomal protein uL24 family. Part of the 50S ribosomal subunit.

One of two assembly initiator proteins, it binds directly to the 5'-end of the 23S rRNA, where it nucleates assembly of the 50S subunit. In terms of biological role, one of the proteins that surrounds the polypeptide exit tunnel on the outside of the subunit. The chain is Large ribosomal subunit protein uL24 from Thermotoga petrophila (strain ATCC BAA-488 / DSM 13995 / JCM 10881 / RKU-1).